The primary structure comprises 351 residues: DNA polymerase IV (351 aa).

A UmuC domain is found at 4–185 (IIHVDMDCFF…LPLAKIPGVG (182 aa)). 2 residues coordinate Mg(2+): Asp8 and Asp103. Residue Glu104 is part of the active site.

The protein belongs to the DNA polymerase type-Y family. In terms of assembly, monomer. Mg(2+) serves as cofactor.

It is found in the cytoplasm. The enzyme catalyses DNA(n) + a 2'-deoxyribonucleoside 5'-triphosphate = DNA(n+1) + diphosphate. Functionally, poorly processive, error-prone DNA polymerase involved in untargeted mutagenesis. Copies undamaged DNA at stalled replication forks, which arise in vivo from mismatched or misaligned primer ends. These misaligned primers can be extended by PolIV. Exhibits no 3'-5' exonuclease (proofreading) activity. May be involved in translesional synthesis, in conjunction with the beta clamp from PolIII. This chain is DNA polymerase IV, found in Salmonella paratyphi B (strain ATCC BAA-1250 / SPB7).